Here is a 156-residue protein sequence, read N- to C-terminus: Peptide deformylase 1 (156 aa).

Fe cation-binding residues include Cys-90 and His-132. Glu-133 is a catalytic residue. Residue His-136 participates in Fe cation binding.

It belongs to the polypeptide deformylase family. Fe(2+) is required as a cofactor.

It carries out the reaction N-terminal N-formyl-L-methionyl-[peptide] + H2O = N-terminal L-methionyl-[peptide] + formate. Removes the formyl group from the N-terminal Met of newly synthesized proteins. Requires at least a dipeptide for an efficient rate of reaction. N-terminal L-methionine is a prerequisite for activity but the enzyme has broad specificity at other positions. The sequence is that of Peptide deformylase 1 from Bacillus anthracis.